The chain runs to 366 residues: tRNA (guanine(26)-N(2))-dimethyltransferase (366 aa).

The tract at residues 1 to 28 is disordered; that stretch reads MEVSEGSVTVEVPEERHGASEGSGEGVF. The Trm1 methyltransferase domain occupies 1 to 365; that stretch reads MEVSEGSVTV…ADVADIRNAV (365 aa). The S-adenosyl-L-methionine site is built by R37, R64, and D79. Residues C234, C237, C254, and C257 each contribute to the Zn(2+) site.

The protein belongs to the class I-like SAM-binding methyltransferase superfamily. Trm1 family.

It carries out the reaction guanosine(26) in tRNA + 2 S-adenosyl-L-methionine = N(2)-dimethylguanosine(26) in tRNA + 2 S-adenosyl-L-homocysteine + 2 H(+). Its function is as follows. Dimethylates a single guanine residue at position 26 of a number of tRNAs using S-adenosyl-L-methionine as donor of the methyl groups. The polypeptide is tRNA (guanine(26)-N(2))-dimethyltransferase (Natronomonas pharaonis (strain ATCC 35678 / DSM 2160 / CIP 103997 / JCM 8858 / NBRC 14720 / NCIMB 2260 / Gabara) (Halobacterium pharaonis)).